The sequence spans 229 residues: Calcyclin-binding protein (229 aa).

An N-acetylalanine modification is found at Ala-2. The interval 2–81 (ASALEELQKD…YTVKISNYGW (80 aa)) is interaction with SIAH1. Position 3 is a phosphoserine (Ser-3). N6-acetyllysine is present on residues Lys-10 and Lys-21. Ser-36 is subject to Phosphoserine. Positions 38–59 (IETELRNKMQQKSQKKPEFDNE) are disordered. Residues 74–168 (VKISNYGWDQ…AENTRWDYLT (95 aa)) form the CS domain. An interaction with SKP1 region spans residues 74 to 229 (VKISNYGWDQ…EKQAREDTEF (156 aa)). Lys-86 and Lys-119 each carry N6-acetyllysine. The interval 155–229 (CRKKAENTRW…EKQAREDTEF (75 aa)) is interaction with S100A6. The 61-residue stretch at 169–229 (QVEKECKEKE…EKQAREDTEF (61 aa)) folds into the SGS domain.

In terms of assembly, component of some large E3 complex at least composed of UBE2D1, SIAH1, CACYBP/SIP, SKP1, APC and TBL1X. Interacts directly with SIAH1, SIAH2 and SKP1. Interacts with protein of the S100 family S100A1, S100A6, S100B, S100P and S100A12 in a calcium-dependent manner. In terms of processing, phosphorylated on serine residues. Phosphorylated upon induction by RA or at high calcium concentrations.

The protein localises to the nucleus. It is found in the cytoplasm. In terms of biological role, may be involved in calcium-dependent ubiquitination and subsequent proteasomal degradation of target proteins. Probably serves as a molecular bridge in ubiquitin E3 complexes. Participates in the ubiquitin-mediated degradation of beta-catenin (CTNNB1). This is Calcyclin-binding protein (Cacybp) from Rattus norvegicus (Rat).